The primary structure comprises 121 residues: Ribosome-binding factor A (121 aa).

This sequence belongs to the RbfA family. Monomer. Binds 30S ribosomal subunits, but not 50S ribosomal subunits or 70S ribosomes.

The protein resides in the cytoplasm. One of several proteins that assist in the late maturation steps of the functional core of the 30S ribosomal subunit. Associates with free 30S ribosomal subunits (but not with 30S subunits that are part of 70S ribosomes or polysomes). Required for efficient processing of 16S rRNA. May interact with the 5'-terminal helix region of 16S rRNA. The sequence is that of Ribosome-binding factor A from Lactobacillus helveticus (strain DPC 4571).